We begin with the raw amino-acid sequence, 331 residues long: GTP-binding protein RHO5 (331 aa).

10–17 (GDGAVGKT) serves as a coordination point for GTP. The interval 51-76 (ASSPLELDNGNDKRGSLSSASSSPST) is disordered. Residues 66-75 (SLSSASSSPS) show a composition bias toward low complexity. GTP contacts are provided by residues 87 to 91 (DTAGQ) and 156 to 159 (TKSD). Residues S223 and S228 each carry the phosphoserine modification. Residues T232 and T244 each carry the phosphothreonine modification. Positions 239 to 331 (TATTNTNGDK…KKKKSKCVIL (93 aa)) are disordered. The segment covering 258–273 (HHNNSTDSTLPKGSLQ) has biased composition (polar residues). A Glycyl lysine isopeptide (Lys-Gly) (interchain with G-Cter in ubiquitin) cross-link involves residue K276. Residues 287-297 (GQKDKIHEQSK) show a composition bias toward basic and acidic residues. Residues 308–331 (HHNKQAKPKTRNDKKKKKSKCVIL) are compositionally biased toward basic residues. C328 is subject to Cysteine methyl ester. C328 carries S-geranylgeranyl cysteine lipidation. Positions 329–331 (VIL) are cleaved as a propeptide — removed in mature form.

The protein belongs to the small GTPase superfamily. Rho family. Interacts with RGD2.

The protein resides in the membrane. Its subcellular location is the mitochondrion. Functionally, small GTPase that negatively regulates a MAP kinase branch, downstream of SLT2, of the PKC1-mediated signal transduction pathway. With its specific guanine nucleotide exchange factor (GEF), the heterodimeric complex DCK1/LMO1, relocates to mitochondria upon oxidative stress and triggers cell death. The DCK1/LMO1/RHO5 signaling module that mediates mitochondrial turnover under nitrogen starvation conditions via mitophagy. The DCK1/LMO1/RHO5 signaling module also plays a role in cell wall integrity signaling. The chain is GTP-binding protein RHO5 from Saccharomyces cerevisiae (strain ATCC 204508 / S288c) (Baker's yeast).